The following is a 189-amino-acid chain: GTPase NRas (189 aa).

GTP contacts are provided by residues 10-18 (GAGGVGKSA) and 29-30 (VD). Positions 32 to 40 (YDPTIEDSY) match the Effector region motif. GTP is bound at residue 57 to 61 (DTAGQ). Ser-89 is modified (phosphoserine). Residue 116–119 (NKCD) coordinates GTP. The hypervariable region stretch occupies residues 166–185 (YRMKKLNSSEDGTQGCMGLP). Lys-170 is covalently cross-linked (Glycyl lysine isopeptide (Lys-Gly) (interchain with G-Cter in ubiquitin)). Cys-181 carries S-palmitoyl cysteine lipidation. The S-farnesyl cysteine moiety is linked to residue Cys-186. The propeptide at 187–189 (VVM) is removed in mature form.

This sequence belongs to the small GTPase superfamily. Ras family. As to quaternary structure, interacts (active GTP-bound form preferentially) with RGS14. Interacts (active GTP-bound form) with RASSF7. Interacts (active GTP-bound form) with both SHOC2 and PP1c (all isoforms) to form a tertiary complex; SHOC2 and PP1c preferably bind M-Ras/MRAS, but they also bind K-Ras/KRAS, N-Ras/NRAS and H-Ras/HRAS. Palmitoylated by the ZDHHC9-GOLGA7 complex. Depalmitoylated by ABHD17A, ABHD17B and ABHD17C. A continuous cycle of de- and re-palmitoylation regulates rapid exchange between plasma membrane and Golgi. Post-translationally, acetylation at Lys-104 prevents interaction with guanine nucleotide exchange factors (GEFs). In terms of processing, ubiquitinated by the BCR(LZTR1) E3 ubiquitin ligase complex at Lys-170 in a non-degradative manner, leading to inhibit Ras signaling by decreasing Ras association with membranes. Phosphorylation at Ser-89 enhances NRAS association with its downstream effectors.

The protein resides in the cell membrane. It localises to the golgi apparatus membrane. It catalyses the reaction GTP + H2O = GDP + phosphate + H(+). Alternates between an inactive form bound to GDP and an active form bound to GTP. Activated by a guanine nucleotide-exchange factor (GEF) and inactivated by a GTPase-activating protein (GAP). In terms of biological role, ras proteins bind GDP/GTP and possess intrinsic GTPase activity. This chain is GTPase NRas (Nras), found in Rattus norvegicus (Rat).